Here is a 183-residue protein sequence, read N- to C-terminus: Threonylcarbamoyl-AMP synthase (183 aa).

In terms of domain architecture, YrdC-like spans 1–183 (MNITQIIEKL…LFTNQLVRQG (183 aa)).

It belongs to the SUA5 family. TsaC subfamily.

The protein resides in the cytoplasm. The enzyme catalyses L-threonine + hydrogencarbonate + ATP = L-threonylcarbamoyladenylate + diphosphate + H2O. In terms of biological role, required for the formation of a threonylcarbamoyl group on adenosine at position 37 (t(6)A37) in tRNAs that read codons beginning with adenine. Catalyzes the conversion of L-threonine, HCO(3)(-)/CO(2) and ATP to give threonylcarbamoyl-AMP (TC-AMP) as the acyladenylate intermediate, with the release of diphosphate. The polypeptide is Threonylcarbamoyl-AMP synthase (Histophilus somni (strain 129Pt) (Haemophilus somnus)).